A 106-amino-acid polypeptide reads, in one-letter code: ATP-dependent Clp protease adapter protein ClpS (106 aa).

The protein belongs to the ClpS family. As to quaternary structure, binds to the N-terminal domain of the chaperone ClpA.

Functionally, involved in the modulation of the specificity of the ClpAP-mediated ATP-dependent protein degradation. This chain is ATP-dependent Clp protease adapter protein ClpS, found in Photobacterium profundum (strain SS9).